A 379-amino-acid chain; its full sequence is Protein trichome birefringence-like 36 (379 aa).

Residues 8–24 traverse the membrane as a helical; Signal-anchor for type II membrane protein segment; that stretch reads VLFLSLCLILGKVVLSQ. The GDS motif motif lies at 123–125; that stretch reads GDS. The DCXHWCLPGXXDXWN motif signature appears at 353–367; that stretch reads DCSHWCLPGVPDIWN.

The protein belongs to the PC-esterase family. TBL subfamily.

It is found in the membrane. In terms of biological role, may act as a bridging protein that binds pectin and other cell wall polysaccharides. Probably involved in maintaining esterification of pectins. May be involved in the specific O-acetylation of cell wall polymers. This is Protein trichome birefringence-like 36 (TBL36) from Arabidopsis thaliana (Mouse-ear cress).